A 453-amino-acid chain; its full sequence is Putative sodium-coupled neutral amino acid transporter 11 (453 aa).

Polar residues predominate over residues 1-10 (MSYQQPQLSG). Positions 1 to 34 (MSYQQPQLSGPLQRETDSSDRESLISGHEHGGKS) are disordered. Basic and acidic residues predominate over residues 14-32 (RETDSSDRESLISGHEHGG). The next 11 membrane-spanning stretches (helical) occupy residues 39 to 59 (AVFN…PYSM), 66 to 86 (LGIL…VLLI), 106 to 126 (GFPG…IAMI), 150 to 170 (GWFI…TLPL), 179 to 199 (LGKI…IVMT), 222 to 242 (AIQA…CFLV), 262 to 282 (ILVS…TFTG), 299 to 319 (VTFG…IECF), 337 to 357 (VFHT…SLMI), 359 to 379 (CLGI…IFII), and 398 to 418 (IMAC…FVMA). N-linked (GlcNAc...) asparagine glycans are attached at residues Asn438 and Asn443.

The protein belongs to the amino acid/polyamine transporter 2 family.

The protein localises to the membrane. Its function is as follows. Putative sodium-dependent amino acid/proton antiporter. The chain is Putative sodium-coupled neutral amino acid transporter 11 (Slc38a11) from Mus musculus (Mouse).